Here is a 347-residue protein sequence, read N- to C-terminus: D-alanine--D-alanine ligase (347 aa).

Residues 138 to 339 enclose the ATP-grasp domain; that stretch reads KILCSHAGIP…YSQVIETILA (202 aa). 171–226 lines the ATP pocket; sequence SDRFTFPLFVKPVDAGSSFGCTFVDFFEQLPVAIEHALQHGKSAIVEPALDAPEVF. Mg(2+) contacts are provided by D296, E308, and N310.

Belongs to the D-alanine--D-alanine ligase family. It depends on Mg(2+) as a cofactor. Mn(2+) serves as cofactor.

It localises to the cytoplasm. It catalyses the reaction 2 D-alanine + ATP = D-alanyl-D-alanine + ADP + phosphate + H(+). It functions in the pathway cell wall biogenesis; peptidoglycan biosynthesis. Its function is as follows. Cell wall formation. The protein is D-alanine--D-alanine ligase of Tropheryma whipplei (strain TW08/27) (Whipple's bacillus).